A 416-amino-acid chain; its full sequence is MGLNEQQNVPSQRKIIVFIVLAFIPIALFRLCFNNPFSSIKDTSLQDSAANVVITSFSSSSQEEESQESFDHIQDEPLCDYTQGNWVRDEIGPLYNGSTCGTIKDGQNCFRHGRPDSGYLYWKWKPNECDIPRFDSNRFLDLMRDKHLAFIGDSMARNQLESLLCLLSTVSSPDLVYRNGEDNKFRRWRFESHNVTVSVYWSPFLVAGLEKSGNLDHNVLHIDRVDERWGNDLERFDTVVVSVGHWFLHPAVYYESGSVLGCHSCETSNCTEVGFYDVFRKAIRTTLRAVAGSGREVILTTFSPSHFEGRPWDSLGACNMTKPYEGKVLEGLDLDMRKIEIEEYTAAAAEVRLEVLDVTAMSVLRPDGHPGPYMYADPFKNGVPERIPNDCLHWCLPGPVDTWNEIMIEMLRRWKV.

The Cytoplasmic portion of the chain corresponds to 1–14 (MGLNEQQNVPSQRK). A helical; Signal-anchor for type II membrane protein transmembrane segment spans residues 15–35 (IIVFIVLAFIPIALFRLCFNN). Over 36-416 (PFSSIKDTSL…MIEMLRRWKV (381 aa)) the chain is Lumenal. Cystine bridges form between C79/C129, C100/C165, C109/C395, and C318/C391. A glycan (N-linked (GlcNAc...) asparagine) is linked at N96. Residues 152-154 (GDS) carry the GDS motif motif. S154 acts as the Nucleophile in catalysis. N-linked (GlcNAc...) asparagine glycosylation is found at N194, N269, and N319. Residue D390 is the Proton donor of the active site. Positions 390–393 (DCLH) match the DXXH motif motif. Residue H393 is the Proton acceptor of the active site.

Belongs to the PC-esterase family. TBL subfamily.

It localises to the golgi apparatus membrane. Functionally, xyloglucan acetyltransferase that catalyzes the acetylation of fucosylated Gal residues on xyloglucan side chains. Predominantly catalyze 6-O-monoacetylation of Gal residues in the Fuc-Gal-Xyl trisaccharide side chains of xyloglucan oligomers. Involved in xyloglucan specific O-acetylation in roots and rosette leaves. The sequence is that of Xyloglucan O-acetyltransferase 1 from Arabidopsis thaliana (Mouse-ear cress).